The following is a 558-amino-acid chain: Dihydroxy-acid dehydratase (558 aa).

Aspartate 78 is a binding site for Mg(2+). Residue cysteine 119 participates in [2Fe-2S] cluster binding. 2 residues coordinate Mg(2+): aspartate 120 and lysine 121. Lysine 121 bears the N6-carboxylysine mark. Cysteine 192 contributes to the [2Fe-2S] cluster binding site. Mg(2+) is bound at residue glutamate 446. Serine 472 functions as the Proton acceptor in the catalytic mechanism.

This sequence belongs to the IlvD/Edd family. In terms of assembly, homodimer. It depends on [2Fe-2S] cluster as a cofactor. Requires Mg(2+) as cofactor.

The catalysed reaction is (2R)-2,3-dihydroxy-3-methylbutanoate = 3-methyl-2-oxobutanoate + H2O. It carries out the reaction (2R,3R)-2,3-dihydroxy-3-methylpentanoate = (S)-3-methyl-2-oxopentanoate + H2O. It participates in amino-acid biosynthesis; L-isoleucine biosynthesis; L-isoleucine from 2-oxobutanoate: step 3/4. Its pathway is amino-acid biosynthesis; L-valine biosynthesis; L-valine from pyruvate: step 3/4. Its function is as follows. Functions in the biosynthesis of branched-chain amino acids. Catalyzes the dehydration of (2R,3R)-2,3-dihydroxy-3-methylpentanoate (2,3-dihydroxy-3-methylvalerate) into 2-oxo-3-methylpentanoate (2-oxo-3-methylvalerate) and of (2R)-2,3-dihydroxy-3-methylbutanoate (2,3-dihydroxyisovalerate) into 2-oxo-3-methylbutanoate (2-oxoisovalerate), the penultimate precursor to L-isoleucine and L-valine, respectively. The polypeptide is Dihydroxy-acid dehydratase (Campylobacter jejuni subsp. jejuni serotype O:23/36 (strain 81-176)).